The following is a 300-amino-acid chain: Protoheme IX farnesyltransferase (300 aa).

9 helical membrane passes run 28–48 (VVAL…PTIL), 50–70 (VQPL…AAAL), 100–120 (ALIF…VFTN), 122–142 (LTAW…TAYL), 149–169 (NIVI…TAVT), 176–196 (ALLL…ALAI), 222–242 (CILL…LVGM), 243–263 (SGPL…YKAW), and 280–300 (FSIY…YLWA).

The protein belongs to the UbiA prenyltransferase family. Protoheme IX farnesyltransferase subfamily.

It localises to the cell inner membrane. The enzyme catalyses heme b + (2E,6E)-farnesyl diphosphate + H2O = Fe(II)-heme o + diphosphate. It participates in porphyrin-containing compound metabolism; heme O biosynthesis; heme O from protoheme: step 1/1. In terms of biological role, converts heme B (protoheme IX) to heme O by substitution of the vinyl group on carbon 2 of heme B porphyrin ring with a hydroxyethyl farnesyl side group. The chain is Protoheme IX farnesyltransferase from Shewanella oneidensis (strain ATCC 700550 / JCM 31522 / CIP 106686 / LMG 19005 / NCIMB 14063 / MR-1).